Reading from the N-terminus, the 237-residue chain is Ribosomal RNA large subunit methyltransferase E (237 aa).

The S-adenosyl-L-methionine site is built by Gly80, Trp82, Asp108, Asp124, and Asp148. The Proton acceptor role is filled by Lys188.

It belongs to the class I-like SAM-binding methyltransferase superfamily. RNA methyltransferase RlmE family.

Its subcellular location is the cytoplasm. The enzyme catalyses uridine(2552) in 23S rRNA + S-adenosyl-L-methionine = 2'-O-methyluridine(2552) in 23S rRNA + S-adenosyl-L-homocysteine + H(+). Functionally, specifically methylates the uridine in position 2552 of 23S rRNA at the 2'-O position of the ribose in the fully assembled 50S ribosomal subunit. The sequence is that of Ribosomal RNA large subunit methyltransferase E from Jannaschia sp. (strain CCS1).